A 389-amino-acid polypeptide reads, in one-letter code: Phospho-N-acetylmuramoyl-pentapeptide-transferase (389 aa).

Transmembrane regions (helical) follow at residues 25–45 (RAVM…PWVI), 74–94 (MGGV…CDWG), 97–117 (FIWV…VDDY), 134–154 (FFWQ…SVSE), 190–210 (VSYP…IVGS), 222–242 (GLVI…AYVM), 259–279 (AGEL…FLWF), 286–306 (VFMG…VAVI), 311–331 (IVLF…MLQV), and 366–386 (QVTV…LSTL).

The protein belongs to the glycosyltransferase 4 family. MraY subfamily. It depends on Mg(2+) as a cofactor.

The protein localises to the cell inner membrane. It catalyses the reaction UDP-N-acetyl-alpha-D-muramoyl-L-alanyl-gamma-D-glutamyl-meso-2,6-diaminopimeloyl-D-alanyl-D-alanine + di-trans,octa-cis-undecaprenyl phosphate = di-trans,octa-cis-undecaprenyl diphospho-N-acetyl-alpha-D-muramoyl-L-alanyl-D-glutamyl-meso-2,6-diaminopimeloyl-D-alanyl-D-alanine + UMP. It functions in the pathway cell wall biogenesis; peptidoglycan biosynthesis. Functionally, catalyzes the initial step of the lipid cycle reactions in the biosynthesis of the cell wall peptidoglycan: transfers peptidoglycan precursor phospho-MurNAc-pentapeptide from UDP-MurNAc-pentapeptide onto the lipid carrier undecaprenyl phosphate, yielding undecaprenyl-pyrophosphoryl-MurNAc-pentapeptide, known as lipid I. This chain is Phospho-N-acetylmuramoyl-pentapeptide-transferase, found in Cupriavidus pinatubonensis (strain JMP 134 / LMG 1197) (Cupriavidus necator (strain JMP 134)).